Reading from the N-terminus, the 302-residue chain is MAKPLSISSSDTQSQPLQWRAYYEMTKPKVVALMLLTVLVGMCLALPGAVPLQPLIFGLLGIGMMAGAAAAFNHLIDRRIDGLMARTYNRPLPKGRVSITKALTFSISLAVLGFVLLYTLVNELTAWLTFASLLGYAVVYTAYLKRATPQNIVVGGLAGAMPPLLGWTSVTGEFHGNALLLVIIIFAWTPPHFWALAIHRKAEYAKVDIPMLPVTHGTEFTKTCILLYTILLAIACLLPVLVGMCGPLYLVGSTLLSCGFIYKSWELKFDDKPGLAMQVFRFSIYHLMLLFIVLLVDHYLWV.

9 consecutive transmembrane segments (helical) span residues Val-30–Val-50, Leu-52–Phe-72, Ala-102–Asn-122, Leu-124–Leu-144, Ile-152–Gly-172, Ala-178–Ile-198, Cys-224–Met-244, Cys-245–Trp-265, and Phe-282–Val-302.

Belongs to the UbiA prenyltransferase family. Protoheme IX farnesyltransferase subfamily.

It is found in the cell inner membrane. The catalysed reaction is heme b + (2E,6E)-farnesyl diphosphate + H2O = Fe(II)-heme o + diphosphate. It functions in the pathway porphyrin-containing compound metabolism; heme O biosynthesis; heme O from protoheme: step 1/1. Its function is as follows. Converts heme B (protoheme IX) to heme O by substitution of the vinyl group on carbon 2 of heme B porphyrin ring with a hydroxyethyl farnesyl side group. This is Protoheme IX farnesyltransferase 1 from Shewanella woodyi (strain ATCC 51908 / MS32).